Here is a 160-residue protein sequence, read N- to C-terminus: Cytochrome b6-f complex subunit 4 (160 aa).

The next 3 membrane-spanning stretches (helical) occupy residues 36–56 (LLYI…GLSV), 95–115 (LLGV…PFIE), and 127–147 (PVAM…GIGA).

It belongs to the cytochrome b family. PetD subfamily. As to quaternary structure, the 4 large subunits of the cytochrome b6-f complex are cytochrome b6, subunit IV (17 kDa polypeptide, petD), cytochrome f and the Rieske protein, while the 4 small subunits are petG, petL, petM and petN. The complex functions as a dimer.

Its subcellular location is the plastid. It localises to the chloroplast thylakoid membrane. In terms of biological role, component of the cytochrome b6-f complex, which mediates electron transfer between photosystem II (PSII) and photosystem I (PSI), cyclic electron flow around PSI, and state transitions. This is Cytochrome b6-f complex subunit 4 from Guillardia theta (Cryptophyte).